The following is a 489-amino-acid chain: WPP domain-interacting protein 1 (489 aa).

The segment at 49–73 (SNSVELGKPMSFDSPGDGGGAYSPV) is disordered. Short sequence motifs (nuclear localization signal) lie at residues 80–81 (RK), 83–84 (RR), and 104–105 (KR). The disordered stretch occupies residues 195-264 (PMISSGQGGN…DDAGGEGGES (70 aa)). A compositionally biased stretch (basic and acidic residues) spans 215-224 (GESVDFEKEN). Residues 323–446 (EIVTLVNNVE…QDLQNDCIEI (124 aa)) are a coiled coil. In terms of domain architecture, KASH spans 459 to 489 (SYVLIQLVLLSTVVLLLLSQLLPEPDTVVPT). The chain crosses the membrane as a helical span at residues 460-480 (YVLIQLVLLSTVVLLLLSQLL).

In terms of assembly, homodimer and heterodimer with WIP2. Component of Ran complexes at least composed of WIT1 or WIT2, RANGAP1 or RANGAP2, and WIP1 or WIP2 or WIP3. Interacts with RANGAP1, RANGAP2, WPP1/MAF1, and WPP2/MAF2. Interacts with SUN1 and SUN2. Interacts with KIN1. Core component of the LINC complex which is composed of inner nuclear membrane SUN domain-containing proteins coupled to outer nuclear membrane WIP and WIT proteins. The LINC complex also involves nucleoskeletal proteins CRWN/LINC and possibly KAKU4 and the cytoskeletal myosin KAKU1. Interacts with WIT1 and SUN2. Interacts with WIT2. Interacts with SUN3. As to expression, expressed in seedlings, roots, stems, leaves, and flowers.

The protein resides in the nucleus envelope. The protein localises to the nucleus membrane. Functionally, mediates and enhances the nuclear envelope docking of RANGAP proteins mediated by WIT1 and WIT2 in the undifferentiated cells of root tips. As component of the SUN-WIP-WIT2-KAKU1 complex, mediates the transfer of cytoplasmic forces to the nuclear envelope (NE), leading to nuclear shape changes. The polypeptide is WPP domain-interacting protein 1 (WIP1) (Arabidopsis thaliana (Mouse-ear cress)).